The sequence spans 720 residues: Polyribonucleotide nucleotidyltransferase (720 aa).

Mg(2+) is bound by residues D487 and D493. The region spanning 554 to 613 (PRIETFKIPTDKIREVIGTGGKVIREIVEKTGAKINIEDDGTVKVASNDGEAMKAAIKWI) is the KH domain. Residues 623-691 (GQIYEGTVVK…DRGKTRLSMK (69 aa)) form the S1 motif domain. The segment at 691 to 720 (KAVDQQTGEDLEAAGHKAEKADAPREAAGE) is disordered. Residues 703–720 (AAGHKAEKADAPREAAGE) show a composition bias toward basic and acidic residues.

It belongs to the polyribonucleotide nucleotidyltransferase family. Mg(2+) is required as a cofactor.

The protein resides in the cytoplasm. It catalyses the reaction RNA(n+1) + phosphate = RNA(n) + a ribonucleoside 5'-diphosphate. Functionally, involved in mRNA degradation. Catalyzes the phosphorolysis of single-stranded polyribonucleotides processively in the 3'- to 5'-direction. In Nitrobacter hamburgensis (strain DSM 10229 / NCIMB 13809 / X14), this protein is Polyribonucleotide nucleotidyltransferase.